A 130-amino-acid chain; its full sequence is Mitochondrial pyruvate carrier 1 (130 aa).

Helical transmembrane passes span 23-45 (LKYIFTTHFWGPVSNFGIPIAAI) and 55-77 (ISGPMTFALVTYSGVFMKYALSV).

This sequence belongs to the mitochondrial pyruvate carrier (MPC) (TC 2.A.105) family. As to quaternary structure, the functional 150 kDa pyruvate import complex is a heteromer of MPC1 and either MPC2 or MPC3.

The protein resides in the mitochondrion. The protein localises to the mitochondrion inner membrane. In terms of biological role, mediates the uptake of pyruvate into mitochondria. The chain is Mitochondrial pyruvate carrier 1 from Saccharomyces cerevisiae (strain ATCC 204508 / S288c) (Baker's yeast).